The chain runs to 314 residues: Ferric-anguibactin transport system permease protein FatD (314 aa).

Helical transmembrane passes span 1–21 (MTFRMILAFFTLCATSLFFGA), 49–69 (VALILTGSGLAMCGVILQHIV), 76–96 (PGTTGSLDAAKLGILVSIVML), 103–123 (ERMFFAVLFCFAAGLVYIAII), 132–152 (ALVPVIGLMFGSVLSALAEFY), 180–200 (IIFLILPITLLTYLYAHRFTV), 207–226 (IASNLGISYAMTAALGLILV), 230–252 (VAVTVVTVGAIHFVGLVIPNLVA), 265–285 (IVALGGASLLIFCDVISRVVL), and 288–308 (FEVPVGLTASAVGGVMFLAFL).

This sequence belongs to the binding-protein-dependent transport system permease family. FecCD subfamily. As to quaternary structure, part of an iron transport system composed of the outer membrane receptor FatA, the periplasmic binding protein FatB and the inner membrane proteins FatC and FatD.

The protein localises to the cell inner membrane. Involved in the uptake of iron in complex with the siderophore anguibactin. Responsible for the translocation of ferric-anguibactin across the cytoplasmic membrane. In Vibrio anguillarum (strain ATCC 68554 / 775) (Listonella anguillarum), this protein is Ferric-anguibactin transport system permease protein FatD.